The following is a 384-amino-acid chain: GTPase Obg (384 aa).

Residues 1–159 (MKFVDEVEIR…RPLKLELMLL (159 aa)) enclose the Obg domain. Residues 72–94 (NGMGKNCTGRRGNDIVLPVPPGT) are disordered. Residues 160 to 333 (ADVGLLGMPN…LCREVMSYLE (174 aa)) enclose the OBG-type G domain. Residues 166 to 173 (GMPNAGKS), 191 to 195 (FTTLI), 213 to 216 (DIPG), 283 to 286 (NKVD), and 314 to 316 (AAL) contribute to the GTP site. Residues S173 and T193 each contribute to the Mg(2+) site. A disordered region spans residues 358 to 384 (EEVLEEEMDDEDDDDDDDHDVEVIYQK). Residues 360-377 (VLEEEMDDEDDDDDDDHD) are compositionally biased toward acidic residues.

This sequence belongs to the TRAFAC class OBG-HflX-like GTPase superfamily. OBG GTPase family. Monomer. Requires Mg(2+) as cofactor.

The protein localises to the cytoplasm. Its function is as follows. An essential GTPase which binds GTP, GDP and possibly (p)ppGpp with moderate affinity, with high nucleotide exchange rates and a fairly low GTP hydrolysis rate. Plays a role in control of the cell cycle, stress response, ribosome biogenesis and in those bacteria that undergo differentiation, in morphogenesis control. This chain is GTPase Obg, found in Idiomarina loihiensis (strain ATCC BAA-735 / DSM 15497 / L2-TR).